The sequence spans 739 residues: Mitochondrial proton/calcium exchanger protein (739 aa).

The transit peptide at methionine 1–arginine 115 directs the protein to the mitochondrion. Positions arginine 115 to glutamate 136 form a coiled coil. Residues aspartate 116–arginine 208 lie on the Mitochondrial intermembrane side of the membrane. At threonine 192 the chain carries Phosphothreonine; by PINK1. The helical transmembrane segment at leucine 209 to valine 229 threads the bilayer. Residues lysine 230–serine 739 are Mitochondrial matrix-facing. Residues lysine 252 to glutamate 537 form the Letm1 RBD domain. Coiled coils occupy residues asparagine 462–glutamate 490 and glutamate 537–glutamate 627. Lysine 597 is modified (N6-acetyllysine). An EF-hand domain is found at isoleucine 663–glutamate 698. 5 residues coordinate Ca(2+): aspartate 676, asparagine 678, aspartate 680, lysine 682, and aspartate 687. The stretch at alanine 708–serine 739 forms a coiled coil. Positions glutamate 718–serine 739 are disordered.

Belongs to the LETM1 family. Homohexamer. Can form 2 complexes: a major (300 kDa) and a minor complex (500-600 kDa). Interacts with BCS1L. Interacts with GHITM. Post-translationally, PINK1-mediated phosphorylation at Thr-192, positively regulates its mitochondrial calcium transport activity.

The protein localises to the mitochondrion inner membrane. It catalyses the reaction Ca(2+)(in) + 2 H(+)(out) = Ca(2+)(out) + 2 H(+)(in). The enzyme catalyses K(+)(in) + H(+)(out) = K(+)(out) + H(+)(in). Inhibited by ruthenium red or its derivative Ru360. Its function is as follows. Plays an important role in maintenance of mitochondrial morphology and in mediating either calcium or potassium/proton antiport. Mediates proton-dependent calcium efflux from mitochondrion. Also functions as an electroneutral mitochondrial proton/potassium exchanger. Crucial for the maintenance of mitochondrial tubular networks and for the assembly of the supercomplexes of the respiratory chain. Required for the maintenance of the tubular shape and cristae organization. The sequence is that of Mitochondrial proton/calcium exchanger protein from Homo sapiens (Human).